The primary structure comprises 55 residues: Protein CADMIUM TOLERANCE 2 (55 aa).

A helical membrane pass occupies residues 24–40; that stretch reads GCLYACIFTALCCFCCY.

This sequence belongs to the CYSTM1 family. Expressed only in roots.

It localises to the cell membrane. It is found in the secreted. The protein localises to the cell wall. Its function is as follows. Confers resistance to heavy metal ions (e.g. cadmium (CdCl(2)) and copper (CuCl(2))) by chelating them at the plasma membrane of root cells, thus stopping their entry and reducing their accumulation. The sequence is that of Protein CADMIUM TOLERANCE 2 from Oryza sativa subsp. japonica (Rice).